The sequence spans 304 residues: Murein tetrapeptide carboxypeptidase (304 aa).

The Nucleophile role is filled by S106. Residues E200 and H270 each act as charge relay system in the active site.

Belongs to the peptidase S66 family.

Its subcellular location is the cytoplasm. The enzyme catalyses N-acetyl-D-glucosaminyl-N-acetylmuramoyl-L-alanyl-meso-2,6-diaminoheptanedioyl-D-alanine + H2O = N-acetyl-D-glucosaminyl-N-acetylmuramoyl-L-alanyl-meso-2,6-diaminoheptanedioate + D-alanine. The protein operates within cell wall biogenesis; peptidoglycan recycling. In terms of biological role, releases the terminal D-alanine residue from the cytoplasmic tetrapeptide recycling product L-Ala-gamma-D-Glu-meso-Dap-D-Ala. Can also cleave D-Ala from murein derivatives containing the tetrapeptide, i.e. MurNAc-tetrapeptide, UDP-MurNAc-tetrapeptide, GlcNAc-MurNAc-tetrapeptide, and GlcNAc-anhMurNAc-tetrapeptide. Does not act on murein sacculi or cross-linked muropeptides. The tripeptides produced by the LcdA reaction can then be reused as peptidoglycan building blocks; LcdA is thereby involved in murein recycling. The polypeptide is Murein tetrapeptide carboxypeptidase (ldcA) (Escherichia coli O6:H1 (strain CFT073 / ATCC 700928 / UPEC)).